Here is a 360-residue protein sequence, read N- to C-terminus: Magnesium-protoporphyrin IX monomethyl ester [oxidative] cyclase (360 aa).

Positions 1–21 are disordered; sequence MPPTAVTEATAVPGSNVTTKD.

This sequence belongs to the AcsF family. It depends on Fe cation as a cofactor.

The catalysed reaction is Mg-protoporphyrin IX 13-monomethyl ester + 3 NADPH + 3 O2 + 2 H(+) = 3,8-divinyl protochlorophyllide a + 3 NADP(+) + 5 H2O. The protein operates within porphyrin-containing compound metabolism; chlorophyll biosynthesis (light-independent). Its function is as follows. Catalyzes the formation of the isocyclic ring in chlorophyll biosynthesis. Mediates the cyclase reaction, which results in the formation of divinylprotochlorophyllide (Pchlide) characteristic of all chlorophylls from magnesium-protoporphyrin IX 13-monomethyl ester (MgPMME). The sequence is that of Magnesium-protoporphyrin IX monomethyl ester [oxidative] cyclase from Synechococcus sp. (strain CC9311).